A 145-amino-acid chain; its full sequence is Hemoglobin subunit beta (145 aa).

A Globin domain is found at 1 to 145; sequence MLTSEEKAAV…VANALAHRYH (145 aa). Threonine 11 bears the Phosphothreonine mark. Lysine 58 carries the N6-acetyllysine modification. A heme b-binding site is contributed by histidine 62. Position 81 is an N6-acetyllysine (lysine 81). Histidine 91 is a heme b binding site. An S-nitrosocysteine modification is found at cysteine 92.

The protein belongs to the globin family. Heterotetramer of two alpha chains and two beta chains. Red blood cells.

Its function is as follows. Involved in oxygen transport from the lung to the various peripheral tissues. This is Hemoglobin subunit beta (HBB) from Rangifer tarandus (Reindeer).